We begin with the raw amino-acid sequence, 238 residues long: tRNA (guanine-N(7)-)-methyltransferase (238 aa).

4 residues coordinate S-adenosyl-L-methionine: Glu68, Glu93, Asp120, and Asp143. Residue Asp143 is part of the active site. Substrate-binding positions include Lys147, Asp179, and 216-219 (TKFE).

This sequence belongs to the class I-like SAM-binding methyltransferase superfamily. TrmB family.

It catalyses the reaction guanosine(46) in tRNA + S-adenosyl-L-methionine = N(7)-methylguanosine(46) in tRNA + S-adenosyl-L-homocysteine. It functions in the pathway tRNA modification; N(7)-methylguanine-tRNA biosynthesis. In terms of biological role, catalyzes the formation of N(7)-methylguanine at position 46 (m7G46) in tRNA. The polypeptide is tRNA (guanine-N(7)-)-methyltransferase (Ectopseudomonas mendocina (strain ymp) (Pseudomonas mendocina)).